Consider the following 456-residue polypeptide: Peptide chain release factor PrfB1, chloroplastic (456 aa).

The transit peptide at 1 to 58 (MSMELTVLGPLAGRSFAIAGKPKLLLLRPTNLPLLRLSLPLSLPNFSSSSRFNSPIVF) directs the protein to the chloroplast.

Belongs to the prokaryotic/mitochondrial release factor family. Expressed in leaves, stems and flowers.

The protein localises to the plastid. It localises to the chloroplast stroma. Directs the termination of translation in response to the peptide chain termination codon UGA. Required for the proper translation, stability and normal processing of UGA-containing polycistronic transcripts in chloroplasts. This Arabidopsis thaliana (Mouse-ear cress) protein is Peptide chain release factor PrfB1, chloroplastic.